The sequence spans 145 residues: Transcription antitermination protein NusB (145 aa).

Belongs to the NusB family.

Involved in transcription antitermination. Required for transcription of ribosomal RNA (rRNA) genes. Binds specifically to the boxA antiterminator sequence of the ribosomal RNA (rrn) operons. The protein is Transcription antitermination protein NusB of Thiobacillus denitrificans (strain ATCC 25259 / T1).